The following is a 474-amino-acid chain: TOM1-like protein 1 (474 aa).

The VHS domain maps to 22–154 (ATFAGVLTED…DLLKKGVQFP (133 aa)). A disordered region spans residues 153-180 (FPPSDGEPETRQEAGQISPNRPTSVPTA). A compositionally biased stretch (polar residues) spans 165–178 (EAGQISPNRPTSVP). Serine 170 carries the post-translational modification Phosphoserine. One can recognise a GAT domain in the interval 199 to 287 (EQIGKLHSEL…AVLGYERFTR (89 aa)). The segment at 291–317 (RLLEQKRNRTEATRTSSEPSAPSCDLL) is disordered. The segment covering 293–302 (LEQKRNRTEA) has biased composition (basic and acidic residues). Phosphoserine occurs at positions 313 and 320. Residues 392–395 (YDNF) are interaction with GRB2. The SH3-binding motif lies at 420–424 (LPPLP). The tract at residues 441 to 444 (YEVM) is interaction with PIK3R1. Tyrosine 457 is modified (phosphotyrosine). Residues 457-460 (YEEI) carry the SH2-binding motif.

It belongs to the TOM1 family. Interacts with LYN. Interacts with the SH2 and SH3 domains of FYN when phosphorylated. Also interacts with GRB2 and PIK3R1 when phosphorylated. Phosphorylated on tyrosines by LYN. Phosphorylated on tyrosines by FYN. As to expression, strongly expressed in brain and kidney, expressed at intermediate levels skin and heart, and weakly expressed in thymus. Not expressed in liver and spleen.

The protein resides in the golgi apparatus. The protein localises to the golgi stack. Its subcellular location is the endosome membrane. It localises to the cytoplasm. It is found in the membrane. Functionally, probable adapter protein involved in signaling pathways. Interacts with the SH2 and SH3 domains of various signaling proteins when it is phosphorylated. May promote FYN activation, possibly by disrupting intramolecular SH3-dependent interactions. The polypeptide is TOM1-like protein 1 (Tom1l1) (Mus musculus (Mouse)).